Here is a 640-residue protein sequence, read N- to C-terminus: Glycosyltransferase-like protein gnt14 (640 aa).

At 1 to 14 (MFGFKTTKNKKRVR) the chain is on the cytoplasmic side. The helical; Signal-anchor for type II membrane protein transmembrane segment at 15–35 (LLVVAIGVMIFFMCLSNFSSI) threads the bilayer. Over 36–640 (QSRQSSSTDT…TENCYSNDHW (605 aa)) the chain is Extracellular. Disordered stretches follow at residues 63–184 (PSIN…PLSS) and 254–277 (NSNNNNNNNNNNNNNNNNNNNNNY). The span at 65 to 171 (ININNSENNI…NININNNNKP (107 aa)) shows a compositional bias: low complexity. An N-linked (GlcNAc...) asparagine glycan is attached at Asn-68. N-linked (GlcNAc...) asparagine glycosylation is found at Asn-410 and Asn-539.

It belongs to the glycosyltransferase 8 family. Highly divergent.

Its subcellular location is the membrane. This is Glycosyltransferase-like protein gnt14 (gnt14) from Dictyostelium discoideum (Social amoeba).